The sequence spans 379 residues: uncharacterized protein (379 aa).

A helical transmembrane segment spans residues 7 to 27 (VYIFAGIFLFIALIILIKIFF).

The protein resides in the membrane. This is an uncharacterized protein from Caenorhabditis elegans.